A 126-amino-acid polypeptide reads, in one-letter code: UPF0538 protein C2orf76 homolog (126 aa).

Belongs to the UPF0538 family.

The polypeptide is UPF0538 protein C2orf76 homolog (Mus musculus (Mouse)).